We begin with the raw amino-acid sequence, 409 residues long: Casein kinase I isoform delta-B (409 aa).

A Protein kinase domain is found at 9-277 (YRLGRKIGSG…YLRQLFRNLF (269 aa)). Residues 15–23 (IGSGSFGDI) and K38 each bind ATP. D128 serves as the catalytic Proton acceptor. Positions 300–315 (TAEEADRERRERDERM) are enriched in basic and acidic residues. Residues 300 to 409 (TAEEADRERR…NSIPFDHHGK (110 aa)) are disordered. An autoinhibitory region spans residues 317-341 (HSRNPAARGIPAASGRPRPTQDGAP). Composition is skewed to polar residues over residues 346–358 (TPTS…SSPR) and 380–402 (NVSS…QNSI).

The protein belongs to the protein kinase superfamily. As to quaternary structure, monomer. Interacts with per1 and per2. Component of the circadian core oscillator. Post-translationally, autophosphorylated on serine and threonine residues.

The protein localises to the cytoplasm. It is found in the nucleus. It catalyses the reaction L-seryl-[protein] + ATP = O-phospho-L-seryl-[protein] + ADP + H(+). The enzyme catalyses L-threonyl-[protein] + ATP = O-phospho-L-threonyl-[protein] + ADP + H(+). Its activity is regulated as follows. Exhibits substrate-dependent heparin activation. Casein kinases are operationally defined by their preferential utilization of acidic proteins such as caseins as substrates. Central component of the circadian clock. May act as a negative regulator of circadian rhythmicity by phosphorylating per1 and per2, which may lead to their degradation. Participates in wnt signaling. This chain is Casein kinase I isoform delta-B (csnk1db), found in Danio rerio (Zebrafish).